The sequence spans 82 residues: Turripeptide Gsg9.1 (82 aa).

Residues 1–23 form the signal peptide; that stretch reads MMAKLMITVMTVFFLSLQQGADG. The propeptide occupies 24-46; it reads LFERWRKNQMAASRIMGNLITAR. P49 and P50 each carry 4-hydroxyproline. Cystine bridges form between C53–C68, C58–C72, and C64–C79. 4-carboxyglutamate is present on residues E60 and E63.

This sequence belongs to the Pg turripeptide superfamily. As to expression, expressed by the venom duct.

Its subcellular location is the secreted. In Gemmula sogodensis (Gem-turris), this protein is Turripeptide Gsg9.1.